A 403-amino-acid polypeptide reads, in one-letter code: Double C2-like domain-containing protein alpha (403 aa).

The interval 1–92 (MRGRRGDRMT…DSYDSDDTTA (92 aa)) is interaction with UNC13D and DYNLT1. C2 domains are found at residues 92-214 (ALGT…HFNI) and 254-387 (ERGR…ERWH). Positions 123, 129, 184, 186, 285, 291, 345, 347, and 353 each coordinate Ca(2+). Residues 218 to 403 (RQVPLPSPSS…PPAAGALPLA (186 aa)) are interaction with UNC13D.

In terms of assembly, interacts (via N-terminus) with UNC13A. Interacts with cytoplasmic dynein light chain DYNLT1. Interacts with UNC13D. Ca(2+) is required as a cofactor. Predominantly expressed in brain. Also found in non-neural tissues. Expressed in RBL-2H3 mast cell line.

It localises to the cytoplasmic vesicle. The protein resides in the secretory vesicle. Its subcellular location is the synaptic vesicle membrane. The protein localises to the synapse. It is found in the synaptosome. It localises to the lysosome. Calcium sensor which most probably regulates fusion of vesicles with membranes. Binds calcium and phospholipids. May be involved in calcium dependent neurotransmitter release through the interaction with UNC13A. May be involved in calcium-dependent spontaneous release of neurotransmitter in absence of action potentials in neuronal cells. Regulates Ca(2+)-dependent secretory lysosome exocytosis in mast cells. The chain is Double C2-like domain-containing protein alpha (Doc2a) from Rattus norvegicus (Rat).